Here is a 301-residue protein sequence, read N- to C-terminus: Sulfate adenylyltransferase subunit 2 (301 aa).

The segment at 279-301 is disordered; sequence RQGRMIDHDSSGSMEEKKKQGYF.

Belongs to the PAPS reductase family. CysD subfamily. In terms of assembly, heterodimer composed of CysD, the smaller subunit, and CysN.

The enzyme catalyses sulfate + ATP + H(+) = adenosine 5'-phosphosulfate + diphosphate. It functions in the pathway sulfur metabolism; hydrogen sulfide biosynthesis; sulfite from sulfate: step 1/3. Functionally, with CysN forms the ATP sulfurylase (ATPS) that catalyzes the adenylation of sulfate producing adenosine 5'-phosphosulfate (APS) and diphosphate, the first enzymatic step in sulfur assimilation pathway. APS synthesis involves the formation of a high-energy phosphoric-sulfuric acid anhydride bond driven by GTP hydrolysis by CysN coupled to ATP hydrolysis by CysD. This chain is Sulfate adenylyltransferase subunit 2, found in Marinomonas sp. (strain MWYL1).